The primary structure comprises 231 residues: ADP-ribose pyrophosphatase (231 aa).

Phe2 bears the N-acetylserine mark. Residues Trp46, 64 to 65, Arg69, and Arg103 each bind substrate; that span reads WD. The 140-residue stretch at 75-214 folds into the Nudix hydrolase domain; sequence GGVDGIGILT…DQQGYKLDAR (140 aa). Mg(2+) is bound at residue Ala115. Residues 116-137 carry the Nudix box motif; it reads GLIDAGEDIDTAALRELKEETG. Leu117 contributes to the substrate binding site. Mg(2+) contacts are provided by Glu131 and Glu135. Asp152 contributes to the substrate binding site. A Mg(2+)-binding site is contributed by Glu185.

The protein belongs to the Nudix hydrolase family. NudF subfamily. Mg(2+) is required as a cofactor. Requires Mn(2+) as cofactor.

The catalysed reaction is ADP-D-ribose + H2O = D-ribose 5-phosphate + AMP + 2 H(+). This chain is ADP-ribose pyrophosphatase (YSA1), found in Saccharomyces cerevisiae (strain ATCC 204508 / S288c) (Baker's yeast).